The following is a 692-amino-acid chain: Elongation factor G (692 aa).

A tr-type G domain is found at 8–282 (EKTRNIGIMA…GVVDYLPSPV (275 aa)). Residues 17 to 24 (AHIDAGKT), 81 to 85 (DTPGH), and 135 to 138 (NKMD) contribute to the GTP site.

This sequence belongs to the TRAFAC class translation factor GTPase superfamily. Classic translation factor GTPase family. EF-G/EF-2 subfamily.

It is found in the cytoplasm. In terms of biological role, catalyzes the GTP-dependent ribosomal translocation step during translation elongation. During this step, the ribosome changes from the pre-translocational (PRE) to the post-translocational (POST) state as the newly formed A-site-bound peptidyl-tRNA and P-site-bound deacylated tRNA move to the P and E sites, respectively. Catalyzes the coordinated movement of the two tRNA molecules, the mRNA and conformational changes in the ribosome. This chain is Elongation factor G, found in Geobacillus kaustophilus (strain HTA426).